We begin with the raw amino-acid sequence, 108 residues long: Integration host factor subunit alpha (108 aa).

It belongs to the bacterial histone-like protein family. In terms of assembly, heterodimer of an alpha and a beta chain.

Functionally, this protein is one of the two subunits of integration host factor, a specific DNA-binding protein that functions in genetic recombination as well as in transcriptional and translational control. The protein is Integration host factor subunit alpha of Methylorubrum populi (strain ATCC BAA-705 / NCIMB 13946 / BJ001) (Methylobacterium populi).